Reading from the N-terminus, the 277-residue chain is MRRPVPYHRVAAIMTILSLAGAGHQARLDARGGMLTGPTANLAPGHVQANLAILPQAVAGDFLRFCQRNPKPCPLLAVSEPGDPSLPELGLDIDIRTDVPRYRVWRDGKLVDEPLDVRGLWRDDLVAFLIGCSFSFEEAMLENGLPVRHIEQGCNVPMYRTNIATHPAGPFSGPLVVSMRPLKAADAIRAIQVTSRFPSVHGAPVHLGDPALIGIADLGRPDYGDAVEIRAGEIPVFWACGVTPQSVVAAVRPEFCITHAPGHMLVTDLLNSRLAAF.

The protein belongs to the D-glutamate cyclase family.

The chain is Putative hydro-lyase BPP3031 from Bordetella parapertussis (strain 12822 / ATCC BAA-587 / NCTC 13253).